A 202-amino-acid polypeptide reads, in one-letter code: Small ribosomal subunit protein uS4 (202 aa).

In terms of domain architecture, S4 RNA-binding spans 94–157; sequence SRLDSLVYRA…LEIPLIKNTL (64 aa).

Belongs to the universal ribosomal protein uS4 family. Part of the 30S ribosomal subunit. Contacts protein S5. The interaction surface between S4 and S5 is involved in control of translational fidelity.

In terms of biological role, one of the primary rRNA binding proteins, it binds directly to 16S rRNA where it nucleates assembly of the body of the 30S subunit. With S5 and S12 plays an important role in translational accuracy. In Ureaplasma parvum serovar 3 (strain ATCC 27815 / 27 / NCTC 11736), this protein is Small ribosomal subunit protein uS4.